A 384-amino-acid chain; its full sequence is Prokineticin receptor 2 (384 aa).

Topologically, residues 1–54 are extracellular; it reads MAAQNGNTSFTPNFNPPQDHASSLSFNFSYGDYDLPMDEDEDMTKTRTFFAAKI. Residues N7 and N27 are each glycosylated (N-linked (GlcNAc...) asparagine). A helical membrane pass occupies residues 55–75; the sequence is VIGIALAGIMLVCGIGNFVFI. The Cytoplasmic portion of the chain corresponds to 76 to 89; it reads AALTRYKKLRNLTN. A helical membrane pass occupies residues 90–110; that stretch reads LLIANLAISDFLVAIICCPFE. Residues 111–136 are Extracellular-facing; it reads MDYYVVRQLSWEHGHVLCASVNYLRT. The cysteines at positions 128 and 208 are disulfide-linked. Residues 137 to 157 traverse the membrane as a helical segment; it reads VSLYVSTNALLAIAIDRYLAI. Residues 158 to 171 lie on the Cytoplasmic side of the membrane; that stretch reads VHPLKPRMNYQTAS. A helical transmembrane segment spans residues 172-192; sequence FLIALVWMVSILIAIPSAYFA. Over 193 to 223 the chain is Extracellular; sequence TETVLFIVKSQEKIFCGQIWPVDQQLYYKSY. Residues 224 to 244 form a helical membrane-spanning segment; it reads FLFIFGVEFVGPVVTMTLCYA. Residues 245–273 lie on the Cytoplasmic side of the membrane; it reads RISRELWFKAVPGFQTEQIRKRLRCRRKT. Residues 274-294 form a helical membrane-spanning segment; sequence VLVLMCILTAYVLCWAPFYGF. Over 295–313 the chain is Extracellular; it reads TIVRDFFPTVFVKEKHYLT. Residues 314–334 form a helical membrane-spanning segment; it reads AFYVVECIAMSNSMINTVCFV. Residues 335–384 lie on the Cytoplasmic side of the membrane; sequence TVKNNTMKYFKKMMLLHWRPSQRGSKSSADLDLRTNGVPTTEEVDCIRLK.

Belongs to the G-protein coupled receptor 1 family. As to quaternary structure, homodimer. In terms of tissue distribution, expressed in the ileocecum, thyroid gland, pituitary gland, salivary gland, adrenal gland, testis, ovary and brain.

It is found in the cell membrane. Its function is as follows. Receptor for prokineticin 2. Exclusively coupled to the G(q) subclass of heteromeric G proteins. Activation leads to mobilization of calcium, stimulation of phosphoinositide turnover and activation of p44/p42 mitogen-activated protein kinase. This Homo sapiens (Human) protein is Prokineticin receptor 2 (PROKR2).